Reading from the N-terminus, the 87-residue chain is Small ribosomal subunit protein bS20 (87 aa).

A compositionally biased stretch (basic residues) spans 1–12; that stretch reads MANHKSALKRNR. The disordered stretch occupies residues 1-21; that stretch reads MANHKSALKRNRQAAVRNARN.

Belongs to the bacterial ribosomal protein bS20 family.

Functionally, binds directly to 16S ribosomal RNA. The sequence is that of Small ribosomal subunit protein bS20 from Syntrophotalea carbinolica (strain DSM 2380 / NBRC 103641 / GraBd1) (Pelobacter carbinolicus).